Consider the following 433-residue polypeptide: MKLFIALVGLLALAKALPAVTHSKVLCYYDSRSYVRESQARMLPLDLDPALSFCTHLLYGYAVIQPDTYKLVSLNENLDIDRTHDNYRAITSLKAKYPGLTVLLSVGGDADTEEPEKYNLLLESQQARTAFINSGVLLAEQYGFDGIDLAWQFPRVKPKKIRSTWGSLWHGIKKTFGTTPVDEKESEHREGFTALVRELKQALIHKPKMQLGVTVLPNVNSTIYHDVPAIINLVDYVNVGAYDYYTPTRNNKEADYTAPIYTPQNRNPLQNADAAVTYWLTSGAPSQKIVLSXRLRSYLETGXDSEIAGVPPIHTDGPGEAGPYVKTEGLLSYPEVCGKLINPNQQKGMRPHLRKVTDPSKRFGTYAFRLPDDNGEGGIWVSYEDPDTAGQKAAYVKSKNLGGVAIVDLSLDDFRGLCTGDKYPILRAAKYRL.

Residues 1 to 16 (MKLFIALVGLLALAKA) form the signal peptide. One can recognise a GH18 domain in the interval 23 to 433 (SKVLCYYDSR…PILRAAKYRL (411 aa)). A disulfide bond links C27 and C54. N220 carries N-linked (GlcNAc...) asparagine glycosylation. C337 and C418 are oxidised to a cystine.

This sequence belongs to the glycosyl hydrolase 18 family. IDGF subfamily.

The protein localises to the secreted. The chain is Chitinase-like protein EN03 from Bombyx mori (Silk moth).